Here is a 189-residue protein sequence, read N- to C-terminus: Peptidyl-tRNA hydrolase (189 aa).

Residue Tyr14 coordinates tRNA. The active-site Proton acceptor is the His19. TRNA contacts are provided by Phe61, Asn63, and Asn109.

Belongs to the PTH family. As to quaternary structure, monomer.

Its subcellular location is the cytoplasm. It carries out the reaction an N-acyl-L-alpha-aminoacyl-tRNA + H2O = an N-acyl-L-amino acid + a tRNA + H(+). Hydrolyzes ribosome-free peptidyl-tRNAs (with 1 or more amino acids incorporated), which drop off the ribosome during protein synthesis, or as a result of ribosome stalling. Its function is as follows. Catalyzes the release of premature peptidyl moieties from peptidyl-tRNA molecules trapped in stalled 50S ribosomal subunits, and thus maintains levels of free tRNAs and 50S ribosomes. The sequence is that of Peptidyl-tRNA hydrolase from Sulfurovum sp. (strain NBC37-1).